A 1037-amino-acid polypeptide reads, in one-letter code: Multidrug resistance protein MdtF (1037 aa).

At 1–9 (MANYFIDRP) the chain is on the cytoplasmic side. A helical transmembrane segment spans residues 10–28 (VFAWVLAIIMMLAGGLAIM). At 29-339 (NLPVAQYPQI…TPFIEISIQE (311 aa)) the chain is on the periplasmic side. The chain crosses the membrane as a helical span at residues 340 to 359 (VFKTLVEAIILVFLVMYLFL). Residues 360 to 365 (QNFRAT) lie on the Cytoplasmic side of the membrane. A helical transmembrane segment spans residues 366–385 (IIPTIAVPVVILGTFAILSA). Residues 386–391 (VGFTIN) are Periplasmic-facing. Residues 392 to 413 (TLTMFGMVLAIGLLVDDAIVVV) form a helical membrane-spanning segment. The Cytoplasmic segment spans residues 414-441 (ENVERVIAEDKLPPKEATHKSMGQIQRA). A helical membrane pass occupies residues 442–460 (LVGIAVVLSAVFMPMAFMS). At 461–473 (GATGEIYRQFSIT) the chain is on the periplasmic side. The helical transmembrane segment at 474–496 (LISSMLLSVFVAMSLTPALCATI) threads the bilayer. Residues 497–536 (LKAAPEGGHKPNALFARFNTLFEKSTQHYTDSTRSLLRCT) are Cytoplasmic-facing. A helical membrane pass occupies residues 537 to 555 (GRYMVVYLLICAGMAVLFL). Residues 556–870 (RTPTSFLPEE…SYQEALSSNQ (315 aa)) are Periplasmic-facing. The helical transmembrane segment at 871 to 890 (APALYAISLVVVFLALAALY) threads the bilayer. The Cytoplasmic segment spans residues 891–896 (ESWSIP). Residues 897-916 (FSVMLVVPLGVVGALLATDL) traverse the membrane as a helical segment. Residues 917-922 (RGLSND) are Periplasmic-facing. The helical transmembrane segment at 923–944 (VYFQVGLLTTIGLSAKNAILIV) threads the bilayer. Topologically, residues 945 to 972 (EFAVEMMQKEGKTPIEAIIEAARMRLRP) are cytoplasmic. A helical membrane pass occupies residues 973–991 (ILMTSLAFILGVLPLVISH). At 992–1004 (GAGSGAQNAVGTG) the chain is on the periplasmic side. A helical membrane pass occupies residues 1005–1027 (VMGGMFAATVLAIYFVPVFFVVV). At 1028-1037 (EHLFARFKKA) the chain is on the cytoplasmic side.

This sequence belongs to the resistance-nodulation-cell division (RND) (TC 2.A.6) family. In terms of assembly, homotrimer. Part of the tripartite efflux system MdtEF-TolC, which is composed of an inner membrane transporter, MdtF, a membrane fusion protein, MdtE, and an outer membrane component, TolC. The complex forms a large protein conduit and can translocate molecules across both the inner and outer membranes.

The protein resides in the cell inner membrane. Part of the tripartite efflux system MdtEF-TolC, which confers resistance to compounds such as rhodamine 6G, erythromycin, doxorubicin, ethidium bromide, TPP, SDS, deoxycholate, crystal violet and benzalkonium. This is Multidrug resistance protein MdtF (mdtF) from Escherichia coli (strain K12).